Reading from the N-terminus, the 131-residue chain is D-ribose pyranase (131 aa).

H20 acts as the Proton donor in catalysis. Substrate is bound by residues D28, H98, and 120-122 (YSN).

It belongs to the RbsD / FucU family. RbsD subfamily. Homodecamer.

It is found in the cytoplasm. The catalysed reaction is beta-D-ribopyranose = beta-D-ribofuranose. It functions in the pathway carbohydrate metabolism; D-ribose degradation; D-ribose 5-phosphate from beta-D-ribopyranose: step 1/2. Functionally, catalyzes the interconversion of beta-pyran and beta-furan forms of D-ribose. The sequence is that of D-ribose pyranase from Pediococcus pentosaceus (strain ATCC 25745 / CCUG 21536 / LMG 10740 / 183-1w).